The following is a 252-amino-acid chain: Ribosomal RNA small subunit methyltransferase J (252 aa).

S-adenosyl-L-methionine-binding positions include 101–102 (RD), 117–118 (ER), 153–154 (SS), and Asp-171.

It belongs to the methyltransferase superfamily. RsmJ family.

It is found in the cytoplasm. It catalyses the reaction guanosine(1516) in 16S rRNA + S-adenosyl-L-methionine = N(2)-methylguanosine(1516) in 16S rRNA + S-adenosyl-L-homocysteine + H(+). In terms of biological role, specifically methylates the guanosine in position 1516 of 16S rRNA. This chain is Ribosomal RNA small subunit methyltransferase J, found in Pseudoalteromonas translucida (strain TAC 125).